The following is a 395-amino-acid chain: Serine/threonine-protein kinase BIK1 (395 aa).

The N-myristoyl glycine moiety is linked to residue Gly2. Cys4 is lipidated: S-palmitoyl cysteine. Phosphoserine is present on Ser26. Residue Lys31 forms a Glycyl lysine isopeptide (Lys-Gly) (interchain with G-Cter in ubiquitin) linkage. Phosphoserine is present on residues Ser32, Ser33, and Ser34. A Phosphothreonine modification is found at Thr35. A Glycyl lysine isopeptide (Lys-Gly) (interchain with G-Cter in ubiquitin) cross-link involves residue Lys41. Thr42 carries the post-translational modification Phosphothreonine. The residue at position 48 (Ser48) is a Phosphoserine; by autocatalysis and BAK1. Phosphothreonine is present on Thr50. Residue Ser54 is modified to Phosphoserine; by autocatalysis. Thr56 carries the post-translational modification Phosphothreonine; by autocatalysis. Thr64 is modified (phosphothreonine). In terms of domain architecture, Protein kinase spans 67–356; sequence FRPDSVIGEG…RALQQLQDNL (290 aa). Phosphoserine; by autocatalysis and BAK1 is present on Ser71. 73 to 81 serves as a coordination point for ATP; the sequence is IGEGGFGCV. A Phosphoserine; by EFR modification is found at Ser89. The Required for physical interaction with and phosphorylation of downstream signaling proteins (e.g. WRKY33, WRKY50, WRKY51 and WRKY57) to activate EFR-mediated immune signaling motif lies at 89-90; that stretch reads ST. A Phosphothreonine; by EFR modification is found at Thr90. Lys95 is covalently cross-linked (Glycyl lysine isopeptide (Lys-Gly) (interchain with G-Cter in ubiquitin)). ATP is bound at residue Lys105. Thr120 is subject to Phosphothreonine; by EFR. Ser129 carries the post-translational modification Phosphoserine; by autocatalysis. Ser129 is modified (phosphoserine; by EFR). Position 150 is a phosphotyrosine (Tyr150). The residue at position 168 (Tyr168) is a Phosphotyrosine; by autocatalysis. Residues Lys170 and Lys186 each participate in a glycyl lysine isopeptide (Lys-Gly) (interchain with G-Cter in ubiquitin) cross-link. Ser193 carries the phosphoserine modification. The active-site Proton acceptor is Asp202. At Ser206 the chain carries Phosphoserine; by autocatalysis and BAK1. Tyr214 bears the Phosphotyrosine; by autocatalysis mark. A Phosphoserine modification is found at Ser219. The residue at position 233 (Ser233) is a Phosphoserine; by autocatalysis. At Ser236 the chain carries O-UMP-serine; by Xanthomonas campestris effector XopAC/AvrAC; alternate. Ser236 carries the post-translational modification Phosphoserine; by autocatalysis and BAK1; alternate. Thr237 carries the O-UMP-threonine; by Xanthomonas campestris effector XopAC/AvrAC; alternate modification. Thr237 is modified (phosphothreonine; by autocatalysis and BAK1; alternate). Thr242 carries the phosphothreonine; by autocatalysis and BAK1 modification. Tyr243 bears the Phosphotyrosine mark. Tyr250 bears the Phosphotyrosine; by autocatalysis mark. Ser252 and Ser253 each carry phosphoserine; by autocatalysis. Lys286 participates in a covalent cross-link: Glycyl lysine isopeptide (Lys-Gly) (interchain with G-Cter in ubiquitin). Position 314 is a phosphothreonine; by autocatalysis (Thr314). Lys337 is covalently cross-linked (Glycyl lysine isopeptide (Lys-Gly) (interchain with G-Cter in ubiquitin)). A Phosphothreonine modification is found at Thr341. Residues 354–365 are compositionally biased toward polar residues; it reads DNLGKPSQTNPV. The disordered stretch occupies residues 354 to 395; it reads DNLGKPSQTNPVKDTKKLGFKTGTTKSSEKRFTQKPFGRHLV. Lys358 participates in a covalent cross-link: Glycyl lysine isopeptide (Lys-Gly) (interchain with G-Cter in ubiquitin). A Phosphoserine; by autocatalysis and BAK1 modification is found at Ser360. Thr362 is modified (phosphothreonine; by autocatalysis and BAK1). Residue Lys366 forms a Glycyl lysine isopeptide (Lys-Gly) (interchain with G-Cter in ubiquitin) linkage. Residue Thr368 is modified to Phosphothreonine; by autocatalysis and BAK1. Residues Thr375 and Thr377 each carry the phosphothreonine modification.

This sequence belongs to the protein kinase superfamily. Ser/Thr protein kinase family. In terms of assembly, interacts with FLS2. Activation of FLS2 by flagellin (flg22) induces the dissociation of the complex. Interacts with BAK1. Interacts with the Xanthomonas campestris effector XopAC/AvrAC. Interacts with CPK28. Interacts with PEPR1. Interacts with PP2C38. Interacts with BRI1. Interacts with RBOHD. Binds to EFR when not phosphorylated at Ser-89 and Thr-90, in the absence of pathogen elicitor; dissociates upon pathogen-associated molecular pattern (PAMP)-triggered activation by EFR-mediated phosphorylation. Interacts directly with and phosphorylates WRKY transcription factors in the nucleus involved in the jasmonic acid (JA) and salicylic acid (SA) regulation (e.g. WRKY33, WRKY50, WRKY51 and WRKY57) to modulate defense hormones during plant immunity. Binds to ATL44/RHA3A and ATL45/RHA3B. Binds to SIK1 to be phosphorylated and stabilized. Phosphorylated by SIK1 to be stabilized. Phosphorylated by FLS2 and BAK1. Autophosphorylated. Autophosphorylation is reduced in presence of the Xanthomonas campestris effector XopAC/AvrAC. Phosphorylated, especially by EFR at Ser-89 and Thr-90, in response to the microbe-associated molecular pattern (MAMP) flg22. Phosphorylation in response to flg22 is abolished in presence of the Xanthomonas campestris effector XopAC/AvrAC. Phosphorylated at Ser-233, Ser-236 and Thr-237 by PEPR1. Phosphorylated at Tyr-150, Tyr-243 and Tyr-250. Tyrosine phosphorylation is required for BIK1 function in plant innate immunity. In terms of processing, uridylylated at Ser-236 and Thr-237 by the Xanthomonas campestris effector XopAC/AvrAC. This conceals conserved phosphorylation sites in the activation loop, reducing BIK1 kinase activity and consequently inhibiting downstream signaling. Post-translationally, monoubiquitinated by ATL44/RHA3A and ATL45/RHA3B following phosphorylation upon the recognition of microbe-associated molecular patterns (MAMPs, e.g. flg22) by pattern recognition receptors (PRRs), then released from the FLS2/BAK1 complex and internalized dynamically into endocytic compartments followed by the activation of immune signaling.

Its subcellular location is the cell membrane. It is found in the endosome membrane. The protein resides in the nucleus. It catalyses the reaction L-seryl-[protein] + ATP = O-phospho-L-seryl-[protein] + ADP + H(+). The catalysed reaction is L-threonyl-[protein] + ATP = O-phospho-L-threonyl-[protein] + ADP + H(+). Kinase activation is repressed by the phosphatase PP2C38. Its function is as follows. Plays a central role in immune responses. Required to activate the resistance responses to necrotrophic pathogens, including the regulation of defense hormone expression (e.g. jasmonic acid (JA) and salicylic acid (SA)). Phosphorylates FLS2 and BAK1. Involved in pathogen-associated molecular pattern (PAMP)-triggered immunity (PTI) signaling, including calcium signaling, and defense responses downstream of FLS2; upon PAMP recognition, first phosphorylated by FLS2 and SIK1 prior to being monoubiquitinated by ATL44/RHA3A and ATL45/RHA3B at the plasma membrane, then internalized dynamically into endocytic compartments together with FLS2. Acts additively with PBL1 in PTI defenses. Acts as a positive regulator of the PAMP flg22-induced increase of cytosolic calcium. Upon flg22 perception, phosphorylates and activates the calcium-permeable channel OSCA1.3, promoting stomatal closure. Phosphorylates the NADPH oxidase RBOHD at specific sites in a calcium-independent manner to enhance reactive oxygen species (ROS) generation upon flg22 perception. ROS production in response to flg22 controls stomatal movement and restriction of bacterial entry into leaf tissues. Seems not required for flg22-induced MAPK activation. Required for Pep1-induced defenses. Pep1 is an endogenous elicitor that potentiates PAMP-inducible plant responses. In association with PEPR1, acts downstream of the canonical ethylene signaling cascade to regulate ethylene responses. Involved in ethylene signaling. Destabilizes EIN3, the key transcription activator in ethylene signaling, and represses EIN3-dependent transcription. Acts as a negative regulator in brassinosteroid (BR) signaling. Functions in BR signaling by direct interaction with the BR receptor BRI1 cytosolic kinase domain. Required during SCOOP small peptides (e.g. SCOOP10 and SCOOP12) perception and signaling; receptor-like cytosolic kinases (RLCK) activated by BAK1/SERK3 and SERK4 coreceptors when associated with MIK2 upon the perception of SCOOP peptides. In terms of biological role, (Microbial infection) Xanthomonas campestris effector AvrAC/XopAC-mediated uridylylation prevents activation by phosphorylation at the same residues, thus affecting immune responses and reducing defense responses toward X.campestris, mediating avrAC/XopAC virulence functions. This is Serine/threonine-protein kinase BIK1 from Arabidopsis thaliana (Mouse-ear cress).